The chain runs to 993 residues: MDQYPDENEEFELQYQDELELLEDLPDEFNAYDGPSTSKQAAEKQKENRAPVAALRDSTRLGNSTLGSPQLSQITFGASQLGGEEEAEGTSSGGQVNRRLFGTPKGPPVGRGCSTPFQRMPAIQELENTQLTSRSYGLEKENAAANQLQEVGLKNVNKRRLERDLFGDIDDLFHESYEDPMVKKARTEEQRDHEAIERILELRRKMRESSKTLRKDDVSRLKALHDFKMRNLSYEIPNWPFLAIQRSDLERIYVRFHSEDYEQRQLDLISARGEVVGSLLGEAKDKIWQEAGEIVLSRATAAEDADVTLVNSNANSEPGRLWVDKYKPRKYIDLLSDEMTNRSLLYWLKMWDKVVFGKAFHSKREQEAVTGEGGTAGGAANQLNSFNKRTGKFESNGGWRQRKSRQALNTNVDALGRPMQKVALLCGPPGLGKTTLAHTIARHAGYNVREINASDDRSPEAFKLALENGTQMSSVLNEDKRPNCIVLDEIDGAPRQSIDYLVKFISDAVYTKVKAKGAKAEHNVLKRPIICICNDVYDPALRPLRQVAFVVTFPPIDAARLAERLVKIAFKEQLKTDFGSLIALAEKSGNDVRSCISSMQFFNAQKHSLTLQDVLNNNLGQKDRHQGLFAVWDAIFRIQRPRKTLHTDANKVDEPAQVTMTNTSVTTRVRNVLEVVHSSGDYERLTQGVYENYLQQKMPDPNFTGVCEALKWFCFTDTVQHQISRQQNYSVYPYLQYGFVAWHLLFATLAWPKIAFPTRGFEFQQKSTNQRNIFQALCKGVTTSALGVGQGGTLLLDTVPLLKRILSPQLRSVAVQLLSPKEQQDLRHTIEVMVDLGLTFVQVKSQEGHYVFQTEPDLDALSAFPGYTGLSLPYFSRQLIAREVDLERIRRAAPKGGAPSAPAAKKKTSGAAAQLPNHLQTLKPKPISASNMHSAPKQQLTKDFFGRITHKSTSTNSAEESKTDAIVKSPIWYRYKEGFNNAVRKDVHIHELL.

The interval 26–72 is disordered; that stretch reads PDEFNAYDGPSTSKQAAEKQKENRAPVAALRDSTRLGNSTLGSPQLS. Residues 60–72 are compositionally biased toward polar residues; the sequence is RLGNSTLGSPQLS. 427-434 lines the ATP pocket; sequence GPPGLGKT. Residues 892 to 913 form a disordered region; it reads AAPKGGAPSAPAAKKKTSGAAA. Residues 894-913 show a composition bias toward low complexity; that stretch reads PKGGAPSAPAAKKKTSGAAA.

This sequence belongs to the activator 1 small subunits family. CTF18 subfamily. Component of the CTF18-RFC complex.

It localises to the nucleus. Chromosome cohesion factor involved in sister chromatid cohesion and fidelity of chromosome transmission. Component of one of the cell nuclear antigen loader complexes, CTF18-replication factor C (CTF18-RFC). The CTF18-RFC complex catalyzes the ATP-dependent loading of PCNA onto primed and gapped DNA and has weak ATPase activity. The CTF18-RFC complex catalyzes the ATP-dependent loading of PCNA onto primed and gapped DNA. The protein is Chromosome transmission fidelity protein 18 homolog of Drosophila melanogaster (Fruit fly).